Here is a 696-residue protein sequence, read N- to C-terminus: MCGIFGYINYLVERDRGYILKTLVKGLKRLEYRGYDSSGCAVDGDEGEDFIMFKEVGNVSKLEASIKGSNVNKSTKFINHCAISHTRWATHGIPSPINCHPQRSDPHSEFIVVHNGILTNYRELRTVLESRGMVFESETDTECVAKLAKFIYDTTPGVDFTSLAKLVFRELEGAYALLIKSSHYPGEVVATRRGSPLIVGVKSEQKLKVDFVDVEFPEPAEGLPGTPKPTSLHPVFSNPATNGMLRGDKPDLLHRAQSRAFVSGEGVPGPIEYFFASDATPIIEYTKRVMFLEDDDIAHVRDGELHVHRLRREGGGSTTRTIETLEMEIASVMKGNYDHYMIKEICEQPDSLLNTMRGRVNFVNRLVTLGGLESYYDIIRKSRRLIFVACGTSYHSCVAVRPLFEELTNIPVVVELASDFVDRCPSVFRDDTFIFVSQSGETADSLLALQYTLENGALAIGVVNCVGSSISRKTHCGVHINAGPEICVASTKAYTSQYVALVLMALYLSRDSVSRLERRNEIIDGLAEIGEKVQETLHLNAAIKQTAIEQLINKDKMLIIGRGYHYATALEGALKVKEISYTHAEGVLAGELKHGVLALVDNDMPIVMLLPDDYNFPKAWNAFEQVRARGGKPIIITDKKLDNLEGFTIIKVPKTVDCLQGILNVIPFQLLSYWLAVKRGHNVDQPRNLAKSVTVE.

The active-site For GATase activity is Cys-2. In terms of domain architecture, Glutamine amidotransferase type-2 spans 2–303; that stretch reads CGIFGYINYL…DDDIAHVRDG (302 aa). SIS domains follow at residues 375–514 and 547–686; these read YYDI…DSVS and AIEQ…VDQP.

The enzyme catalyses D-fructose 6-phosphate + L-glutamine = D-glucosamine 6-phosphate + L-glutamate. It participates in nucleotide-sugar biosynthesis; UDP-N-acetyl-alpha-D-glucosamine biosynthesis; alpha-D-glucosamine 6-phosphate from D-fructose 6-phosphate: step 1/1. Involved in amino sugar synthesis (formation of chitin, supplies the amino sugars of asparagine-linked oligosaccharides of glycoproteins). In Schizosaccharomyces pombe (strain 972 / ATCC 24843) (Fission yeast), this protein is Probable glutamine--fructose-6-phosphate aminotransferase [isomerizing].